Consider the following 454-residue polypeptide: Glutamyl-tRNA reductase (454 aa).

Residues 49–52 (TCNR), serine 109, 114–116 (ETQ), and glutamine 120 contribute to the substrate site. Cysteine 50 functions as the Nucleophile in the catalytic mechanism. 189–194 (GAGKMS) is an NADP(+) binding site. The tract at residues 434–454 (NDKNKQTSSSREQVLVSRFPD) is disordered.

This sequence belongs to the glutamyl-tRNA reductase family. As to quaternary structure, homodimer.

It catalyses the reaction (S)-4-amino-5-oxopentanoate + tRNA(Glu) + NADP(+) = L-glutamyl-tRNA(Glu) + NADPH + H(+). Its pathway is porphyrin-containing compound metabolism; protoporphyrin-IX biosynthesis; 5-aminolevulinate from L-glutamyl-tRNA(Glu): step 1/2. Its function is as follows. Catalyzes the NADPH-dependent reduction of glutamyl-tRNA(Glu) to glutamate 1-semialdehyde (GSA). This chain is Glutamyl-tRNA reductase, found in Brevibacillus brevis (strain 47 / JCM 6285 / NBRC 100599).